A 148-amino-acid polypeptide reads, in one-letter code: Sec-independent protein translocase protein TatB (148 aa).

Residues 2–22 (FNDIGPLELVTLVVLAVLVFG) traverse the membrane as a helical segment. Basic and acidic residues-rich tracts occupy residues 100–110 (VTDAVHGRESE) and 128–148 (MTKKREQLEADERPPFDADAT). The interval 100 to 148 (VTDAVHGRESETSASSSSANGSAGGTVDMTKKREQLEADERPPFDADAT) is disordered.

Belongs to the TatB family. As to quaternary structure, the Tat system comprises two distinct complexes: a TatABC complex, containing multiple copies of TatA, TatB and TatC subunits, and a separate TatA complex, containing only TatA subunits. Substrates initially bind to the TatABC complex, which probably triggers association of the separate TatA complex to form the active translocon.

It localises to the cell membrane. In terms of biological role, part of the twin-arginine translocation (Tat) system that transports large folded proteins containing a characteristic twin-arginine motif in their signal peptide across membranes. Together with TatC, TatB is part of a receptor directly interacting with Tat signal peptides. TatB may form an oligomeric binding site that transiently accommodates folded Tat precursor proteins before their translocation. The chain is Sec-independent protein translocase protein TatB from Streptomyces avermitilis (strain ATCC 31267 / DSM 46492 / JCM 5070 / NBRC 14893 / NCIMB 12804 / NRRL 8165 / MA-4680).